Reading from the N-terminus, the 315-residue chain is Small ribosomal subunit protein uS3 (315 aa).

The KH type-2 domain occupies 38 to 106 (IRKMMSRGME…QVQLNILEVK (69 aa)). The disordered stretch occupies residues 211–315 (AEREAQEALQ…VANTPEKAEE (105 aa)). Basic residues predominate over residues 222–232 (QTRRERPRRGP). Residues 265–315 (APAETPAGEAAATEPTAPVAEPATAAASAPAEAASAPAEAAVANTPEKAEE) are compositionally biased toward low complexity.

This sequence belongs to the universal ribosomal protein uS3 family. In terms of assembly, part of the 30S ribosomal subunit. Forms a tight complex with proteins S10 and S14.

Binds the lower part of the 30S subunit head. Binds mRNA in the 70S ribosome, positioning it for translation. This Frankia casuarinae (strain DSM 45818 / CECT 9043 / HFP020203 / CcI3) protein is Small ribosomal subunit protein uS3.